Consider the following 155-residue polypeptide: Probable methanogenesis regulatory protein FilR2 (155 aa).

The Response regulatory domain maps to 18–142; the sequence is IILLVEDNNA…DLKRTVEEIK (125 aa). A 4-aspartylphosphate modification is found at Asp-75.

Phosphorylated by FilI.

In terms of biological role, member of the two-component regulatory system FilI/FilRs, which is involved in the regulation of methanogenesis. The sequence is that of Probable methanogenesis regulatory protein FilR2 from Methanothrix harundinacea (strain 6Ac) (Methanosaeta harundinacea).